The primary structure comprises 658 residues: UvrABC system protein B (658 aa).

The region spanning 25-178 (KSLKNKNHYQ…KSFLLKLVEM (154 aa)) is the Helicase ATP-binding domain. 38–45 (GVTGSGKT) is a binding site for ATP. The short motif at 91-114 (HFDYYQPESYIPRRDLFIEKDSSI) is the Beta-hairpin element. One can recognise a Helicase C-terminal domain in the interval 433–607 (QVQDLFDEIK…ELKLRDDETK (175 aa)). One can recognise a UVR domain in the interval 623–658 (EKIIKELDKKMRECAKNLDFEEAMHLRDEIAKLRTL).

The protein belongs to the UvrB family. In terms of assembly, forms a heterotetramer with UvrA during the search for lesions. Interacts with UvrC in an incision complex.

The protein resides in the cytoplasm. Its function is as follows. The UvrABC repair system catalyzes the recognition and processing of DNA lesions. A damage recognition complex composed of 2 UvrA and 2 UvrB subunits scans DNA for abnormalities. Upon binding of the UvrA(2)B(2) complex to a putative damaged site, the DNA wraps around one UvrB monomer. DNA wrap is dependent on ATP binding by UvrB and probably causes local melting of the DNA helix, facilitating insertion of UvrB beta-hairpin between the DNA strands. Then UvrB probes one DNA strand for the presence of a lesion. If a lesion is found the UvrA subunits dissociate and the UvrB-DNA preincision complex is formed. This complex is subsequently bound by UvrC and the second UvrB is released. If no lesion is found, the DNA wraps around the other UvrB subunit that will check the other stand for damage. The polypeptide is UvrABC system protein B (Helicobacter acinonychis (strain Sheeba)).